A 182-amino-acid chain; its full sequence is Heat shock protein beta-2 (182 aa).

Residues 55–163 enclose the sHSP domain; the sequence is RAGEGGRAGA…DTEVNEVYIS (109 aa).

This sequence belongs to the small heat shock protein (HSP20) family. As to quaternary structure, interacts with DMPK; may enhance its kinase activity.

It is found in the cytoplasm. It localises to the nucleus. May regulate the kinase DMPK. The protein is Heat shock protein beta-2 (Hspb2) of Rattus norvegicus (Rat).